A 102-amino-acid chain; its full sequence is Small ribosomal subunit protein uS10 (102 aa).

It belongs to the universal ribosomal protein uS10 family. As to quaternary structure, part of the 30S ribosomal subunit.

In terms of biological role, involved in the binding of tRNA to the ribosomes. The sequence is that of Small ribosomal subunit protein uS10 from Micrococcus luteus (strain ATCC 4698 / DSM 20030 / JCM 1464 / CCM 169 / CCUG 5858 / IAM 1056 / NBRC 3333 / NCIMB 9278 / NCTC 2665 / VKM Ac-2230) (Micrococcus lysodeikticus).